We begin with the raw amino-acid sequence, 425 residues long: Serine--tRNA ligase (425 aa).

230–232 (TSE) provides a ligand contact to L-serine. Residues 261–263 (RRE) and valine 277 contribute to the ATP site. Glutamate 284 provides a ligand contact to L-serine. 348–351 (ELTS) contributes to the ATP binding site. Threonine 382 is an L-serine binding site.

It belongs to the class-II aminoacyl-tRNA synthetase family. Type-1 seryl-tRNA synthetase subfamily. In terms of assembly, homodimer. The tRNA molecule binds across the dimer.

It is found in the cytoplasm. The enzyme catalyses tRNA(Ser) + L-serine + ATP = L-seryl-tRNA(Ser) + AMP + diphosphate + H(+). It catalyses the reaction tRNA(Sec) + L-serine + ATP = L-seryl-tRNA(Sec) + AMP + diphosphate + H(+). Its pathway is aminoacyl-tRNA biosynthesis; selenocysteinyl-tRNA(Sec) biosynthesis; L-seryl-tRNA(Sec) from L-serine and tRNA(Sec): step 1/1. Functionally, catalyzes the attachment of serine to tRNA(Ser). Is also able to aminoacylate tRNA(Sec) with serine, to form the misacylated tRNA L-seryl-tRNA(Sec), which will be further converted into selenocysteinyl-tRNA(Sec). The protein is Serine--tRNA ligase of Streptomyces coelicolor (strain ATCC BAA-471 / A3(2) / M145).